The primary structure comprises 601 residues: uncharacterized protein (601 aa).

Residues 127–364 (SSLFSSGSPP…PAFANDDTVH (238 aa)) form a disordered region. The segment covering 128 to 137 (SLFSSGSPPD) has biased composition (polar residues). A compositionally biased stretch (low complexity) spans 141–154 (RNSTSNLSSVSTNS). Composition is skewed to polar residues over residues 159–177 (TIGSNYNMLQSTKSTASQR), 199–213 (ALSSPTQGASSNVTP), and 232–250 (SATNEANKLSDIQTSSPSQ). Phosphoserine occurs at positions 247 and 281. Low complexity predominate over residues 265–281 (SLSSSPSSEDSDLSLSS). Composition is skewed to basic and acidic residues over residues 286–296 (DEKKQPSKSEK) and 313–325 (GSKEQNRIAKEKA). Phosphoserine is present on Ser335. The span at 338–356 (DTSTEYDSNSLRRSRSNPA) shows a compositional bias: polar residues.

This is an uncharacterized protein from Schizosaccharomyces pombe (strain 972 / ATCC 24843) (Fission yeast).